The primary structure comprises 399 residues: Glutathione S-transferase LANCL1 (399 aa).

The residue at position 2 (Ala2) is an N-acetylalanine. An N6-acetyllysine modification is found at Lys142. A Zn(2+)-binding site is contributed by Cys276. Residue Lys317 participates in glutathione binding. Residues Cys322 and His323 each coordinate Zn(2+). 364–367 contributes to the glutathione binding site; sequence RTAD.

It belongs to the LanC-like protein family. In terms of assembly, interacts with the C-terminal of STOM. Interacts with the EPS8 SH3 domain. Interaction with EPS8 is inhibited by glutathione binding. In terms of tissue distribution, detected in spinal cord (at protein level). Ubiquitous. Strongly expressed in brain, testis, alveolar macrophages and epithelial cells of the lung, kidney and intestine. Expression in brain increases during the first postnatal month and remaining high in adult.

It is found in the cytoplasm. It localises to the cell membrane. It catalyses the reaction RX + glutathione = an S-substituted glutathione + a halide anion + H(+). The enzyme catalyses 1-chloro-2,4-dinitrobenzene + glutathione = 2,4-dinitrophenyl-S-glutathione + chloride + H(+). Functions as a glutathione transferase. Catalyzes conjugation of the glutathione (GSH) to artificial substrates 1-chloro-2,4-dinitrobenzene (CDNB) and p-nitrophenyl acetate. Mitigates neuronal oxidative stress during normal postnatal development and in response to oxidative stresses probably through GSH antioxidant defense mechanism. May play a role in EPS8 signaling. Binds glutathione. This chain is Glutathione S-transferase LANCL1, found in Mus musculus (Mouse).